Consider the following 439-residue polypeptide: MTIETIKRIIEEENVRFIRLQFTDINGTLKNLEITPDVFLESWEDGIMFDGSSIEGFVRIEESDMYLKPVLDTFAVLPWTVDGAKSARVICDVYTPDGKPFEGDPRYRLRRMMEKAEQLGYTPYAGPEMEFFILPINEKGEPVPEFLDHGGYFDLLPLSKVEEIRRDIAIALEKMGITVEATHHEVAPSQHEVDFRYDTFLRTADNAQTVKLVIKTMAIFHGYHATFMPKPFYGVNGSGMHVHMSLFRGDKNAFYDPDDPLGLSKELRYFVGGILKHAKALAAVTNPTINSYKRLVPGYEAPVYISWSVGNRSALIRIPKARGKATRLEYRSPDPSCNIYLAFAAILAAGLDGIINKIEPPAPVEENIYHMTSERREELNIESLPGSLKEAVEELKKDDVIIDALGEHIFEKFVEAAEKDWKEFSTYVTNWELQRYLYL.

The GS beta-grasp domain maps to 13-98; it reads ENVRFIRLQF…VICDVYTPDG (86 aa). One can recognise a GS catalytic domain in the interval 105-439; that stretch reads PRYRLRRMME…NWELQRYLYL (335 aa). Mg(2+)-binding residues include glutamate 128 and glutamate 130. Glutamate 180 serves as a coordination point for ATP. Positions 185 and 192 each coordinate Mg(2+). L-glutamate-binding positions include 236–237 and glycine 237; that span reads NG. Histidine 241 is a Mg(2+) binding site. ATP contacts are provided by residues 243–245 and serine 245; that span reads HMS. Arginine 294, glutamate 300, and arginine 312 together coordinate L-glutamate. ATP is bound by residues arginine 312, arginine 317, and lysine 324. Glutamate 329 provides a ligand contact to Mg(2+). Arginine 331 serves as a coordination point for L-glutamate.

The protein belongs to the glutamine synthetase family. As to quaternary structure, oligomer of 12 subunits arranged in the form of two hexagons. In its feedback-inhibited form, interacts with TnrA in order to block its DNA-binding activity. Requires Mg(2+) as cofactor.

It is found in the cytoplasm. The enzyme catalyses L-glutamate + NH4(+) + ATP = L-glutamine + ADP + phosphate + H(+). Its activity is regulated as follows. Inhibited by glutamine. Functionally, glutamine synthetase (GS) is an unusual multitasking protein that functions as an enzyme, a transcription coregulator, and a chaperone in ammonium assimilation and in the regulation of genes involved in nitrogen metabolism. It catalyzes the ATP-dependent biosynthesis of glutamine from glutamate and ammonia. Feedback-inhibited GlnA also interacts with and regulates the activity of the transcriptional regulator TnrA. During nitrogen limitation, TnrA is in its DNA-binding active state and turns on the transcription of genes required for nitrogen assimilation. Under conditions of nitrogen excess, feedback-inhibited GlnA forms a stable complex with TnrA, which inhibits its DNA-binding activity. In contrast, feedback-inhibited GlnA acts as a chaperone to stabilize the DNA-binding activity of GlnR, which represses the transcription of nitrogen assimilation genes. In Thermotoga maritima (strain ATCC 43589 / DSM 3109 / JCM 10099 / NBRC 100826 / MSB8), this protein is Glutamine synthetase.